The sequence spans 163 residues: Endoribonuclease YbeY (163 aa).

Residues His129, His133, and His139 each coordinate Zn(2+).

The protein belongs to the endoribonuclease YbeY family. Requires Zn(2+) as cofactor.

It localises to the cytoplasm. In terms of biological role, single strand-specific metallo-endoribonuclease involved in late-stage 70S ribosome quality control and in maturation of the 3' terminus of the 16S rRNA. This is Endoribonuclease YbeY from Picosynechococcus sp. (strain ATCC 27264 / PCC 7002 / PR-6) (Agmenellum quadruplicatum).